The chain runs to 172 residues: Large ribosomal subunit protein uL10 (172 aa).

Belongs to the universal ribosomal protein uL10 family. As to quaternary structure, part of the ribosomal stalk of the 50S ribosomal subunit. The N-terminus interacts with L11 and the large rRNA to form the base of the stalk. The C-terminus forms an elongated spine to which L12 dimers bind in a sequential fashion forming a multimeric L10(L12)X complex.

Its function is as follows. Forms part of the ribosomal stalk, playing a central role in the interaction of the ribosome with GTP-bound translation factors. In Brucella suis (strain ATCC 23445 / NCTC 10510), this protein is Large ribosomal subunit protein uL10.